We begin with the raw amino-acid sequence, 164 residues long: Peptidyl-prolyl cis-trans isomerase CYP18-2 (164 aa).

One can recognise a PPIase cyclophilin-type domain in the interval 12–162 (VTLETSMGPF…HEVKILRTKV (151 aa)).

It belongs to the cyclophilin-type PPIase family. Ubiquitous.

It is found in the cytoplasm. The enzyme catalyses [protein]-peptidylproline (omega=180) = [protein]-peptidylproline (omega=0). PPIases accelerate the folding of proteins. It catalyzes the cis-trans isomerization of proline imidic peptide bonds in oligopeptides. In Arabidopsis thaliana (Mouse-ear cress), this protein is Peptidyl-prolyl cis-trans isomerase CYP18-2 (CYP18-2).